Consider the following 485-residue polypeptide: Keratin, type I cytoskeletal 14 (485 aa).

A compositionally biased stretch (polar residues) spans methionine 1 to lysine 15. The interval methionine 1–glycine 21 is disordered. The head stretch occupies residues methionine 1–serine 121. Positions glutamate 122–tryptophan 157 are coil 1A. In terms of domain architecture, IF rod spans glutamate 122–leucine 433. The tract at residues tyrosine 158 to threonine 175 is linker 1. Positions isoleucine 176 to methionine 267 are coil 1B. Positions arginine 268 to isoleucine 290 are linker 12. The segment at leucine 291 to glutamate 429 is coil 2. The interval aspartate 430–asparagine 485 is tail. Positions histidine 432–asparagine 485 are interaction with Type I keratins and keratin filaments. The segment covering glutamine 437–serine 451 has biased composition (low complexity). Positions glutamine 437–asparagine 458 are disordered. At serine 448 the chain carries Phosphoserine.

It belongs to the intermediate filament family. Heterotetramer of two type I and two type II keratins. Forms a disulfide-linked heterodimer (via 2B domains) with KRT5 (via 2B domains). Forms a heterodimer with KRT1; the interaction is more abundant in the absence of KRT5. Interacts with TRADD and with keratin filaments. Associates with other type I keratins. Interacts with EPPK1. Interacts with KLHL24. Interacts with PKP1 (via N-terminus) and PKP2. In terms of processing, a disulfide bond is formed between rather than within filaments and promotes the formation of a keratin filament cage around the nucleus. Post-translationally, ubiquitinated by the BCR(KLHL24) E3 ubiquitin ligase complex. In terms of tissue distribution, expressed in most cells of squamous cell carcinomas, in spinous and suprabasal cells around the branching papillary region of papillomas, and weakly in a few proliferative cells of hyperplastic tissue.

Its subcellular location is the cytoplasm. It is found in the nucleus. Its function is as follows. The nonhelical tail domain is involved in promoting KRT5-KRT14 filaments to self-organize into large bundles and enhances the mechanical properties involved in resilience of keratin intermediate filaments in vitro. In Rattus norvegicus (Rat), this protein is Keratin, type I cytoskeletal 14 (Krt14).